Here is a 100-residue protein sequence, read N- to C-terminus: Urease subunit gamma (100 aa).

This sequence belongs to the urease gamma subunit family. In terms of assembly, heterotrimer of UreA (gamma), UreB (beta) and UreC (alpha) subunits. Three heterotrimers associate to form the active enzyme.

The protein localises to the cytoplasm. It carries out the reaction urea + 2 H2O + H(+) = hydrogencarbonate + 2 NH4(+). It participates in nitrogen metabolism; urea degradation; CO(2) and NH(3) from urea (urease route): step 1/1. In Opitutus terrae (strain DSM 11246 / JCM 15787 / PB90-1), this protein is Urease subunit gamma.